A 159-amino-acid chain; its full sequence is Putative 2'-deoxynucleoside 5'-phosphate N-hydrolase 1 (159 aa).

Residues phenylalanine 25–arginine 31, tyrosine 40, histidine 58, glutamate 104, and serine 126–methionine 128 each bind substrate.

This sequence belongs to the 2'-deoxynucleoside 5'-phosphate N-hydrolase 1 family. In terms of assembly, monomer and homodimer.

It catalyses the reaction a pyrimidine 2'-deoxyribonucleoside 5'-phosphate + H2O = a pyrimidine nucleobase + 2-deoxy-D-ribose 5-phosphate. The catalysed reaction is a purine 2'-deoxyribonucleoside 5'-phosphate + H2O = a purine nucleobase + 2-deoxy-D-ribose 5-phosphate. Catalyzes the cleavage of the N-glycosidic bond of deoxyribonucleoside 5'-monophosphates to yield deoxyribose 5-phosphate and a purine or pyrimidine base. The chain is Putative 2'-deoxynucleoside 5'-phosphate N-hydrolase 1 from Methanosarcina barkeri (strain Fusaro / DSM 804).